Reading from the N-terminus, the 280-residue chain is Urease accessory protein UreD (280 aa).

This sequence belongs to the UreD family. UreD, UreF and UreG form a complex that acts as a GTP-hydrolysis-dependent molecular chaperone, activating the urease apoprotein by helping to assemble the nickel containing metallocenter of UreC. The UreE protein probably delivers the nickel.

The protein resides in the cytoplasm. In terms of biological role, required for maturation of urease via the functional incorporation of the urease nickel metallocenter. This Pseudomonas aeruginosa (strain ATCC 15692 / DSM 22644 / CIP 104116 / JCM 14847 / LMG 12228 / 1C / PRS 101 / PAO1) protein is Urease accessory protein UreD.